The chain runs to 20 residues: Phospholipase A2 D5 (20 aa).

Requires Ca(2+) as cofactor. Post-translationally, contains seven disulfide bonds. In terms of tissue distribution, expressed by the venom gland.

The protein resides in the secreted. It catalyses the reaction a 1,2-diacyl-sn-glycero-3-phosphocholine + H2O = a 1-acyl-sn-glycero-3-phosphocholine + a fatty acid + H(+). Functionally, PLA2 catalyzes the calcium-dependent hydrolysis of the 2-acyl groups in 3-sn-phosphoglycerides. The sequence is that of Phospholipase A2 D5 from Micrurus pyrrhocryptus (Coral snake).